The following is a 113-amino-acid chain: Large ribosomal subunit protein bL19 (113 aa).

This sequence belongs to the bacterial ribosomal protein bL19 family.

This protein is located at the 30S-50S ribosomal subunit interface and may play a role in the structure and function of the aminoacyl-tRNA binding site. The protein is Large ribosomal subunit protein bL19 of Mycolicibacterium smegmatis (strain ATCC 700084 / mc(2)155) (Mycobacterium smegmatis).